A 202-amino-acid polypeptide reads, in one-letter code: Dephospho-CoA kinase (202 aa).

Residues 3 to 201 enclose the DPCK domain; that stretch reads AIGLTGGIGS…QRYLGFAAAA (199 aa). 11-16 is a binding site for ATP; the sequence is GSGKTT.

Belongs to the CoaE family.

Its subcellular location is the cytoplasm. It catalyses the reaction 3'-dephospho-CoA + ATP = ADP + CoA + H(+). It functions in the pathway cofactor biosynthesis; coenzyme A biosynthesis; CoA from (R)-pantothenate: step 5/5. Functionally, catalyzes the phosphorylation of the 3'-hydroxyl group of dephosphocoenzyme A to form coenzyme A. The polypeptide is Dephospho-CoA kinase (Burkholderia lata (strain ATCC 17760 / DSM 23089 / LMG 22485 / NCIMB 9086 / R18194 / 383)).